Here is a 157-residue protein sequence, read N- to C-terminus: Crossover junction endodeoxyribonuclease RuvC (157 aa).

Residues aspartate 7, glutamate 66, and aspartate 139 contribute to the active site. 3 residues coordinate Mg(2+): aspartate 7, glutamate 66, and aspartate 139.

It belongs to the RuvC family. In terms of assembly, homodimer which binds Holliday junction (HJ) DNA. The HJ becomes 2-fold symmetrical on binding to RuvC with unstacked arms; it has a different conformation from HJ DNA in complex with RuvA. In the full resolvosome a probable DNA-RuvA(4)-RuvB(12)-RuvC(2) complex forms which resolves the HJ. It depends on Mg(2+) as a cofactor.

It localises to the cytoplasm. It catalyses the reaction Endonucleolytic cleavage at a junction such as a reciprocal single-stranded crossover between two homologous DNA duplexes (Holliday junction).. In terms of biological role, the RuvA-RuvB-RuvC complex processes Holliday junction (HJ) DNA during genetic recombination and DNA repair. Endonuclease that resolves HJ intermediates. Cleaves cruciform DNA by making single-stranded nicks across the HJ at symmetrical positions within the homologous arms, yielding a 5'-phosphate and a 3'-hydroxyl group; requires a central core of homology in the junction. The consensus cleavage sequence is 5'-(A/T)TT(C/G)-3'. Cleavage occurs on the 3'-side of the TT dinucleotide at the point of strand exchange. HJ branch migration catalyzed by RuvA-RuvB allows RuvC to scan DNA until it finds its consensus sequence, where it cleaves and resolves the cruciform DNA. The polypeptide is Crossover junction endodeoxyribonuclease RuvC (Helicobacter acinonychis (strain Sheeba)).